We begin with the raw amino-acid sequence, 382 residues long: D-galactonate dehydratase (382 aa).

Asp-183 lines the Mg(2+) pocket. Residue His-185 is the Proton donor of the active site. Mg(2+)-binding residues include Glu-209 and Glu-235. The active-site Proton acceptor is His-285.

It belongs to the mandelate racemase/muconate lactonizing enzyme family. GalD subfamily. The cofactor is Mg(2+).

The catalysed reaction is D-galactonate = 2-dehydro-3-deoxy-D-galactonate + H2O. It functions in the pathway carbohydrate acid metabolism; D-galactonate degradation; D-glyceraldehyde 3-phosphate and pyruvate from D-galactonate: step 1/3. Its function is as follows. Catalyzes the dehydration of D-galactonate to 2-keto-3-deoxy-D-galactonate. The polypeptide is D-galactonate dehydratase (Salmonella dublin (strain CT_02021853)).